The following is a 442-amino-acid chain: Putative aminohydrolase SsnA (442 aa).

Zn(2+)-binding residues include histidine 62, histidine 64, histidine 227, and aspartate 312.

The protein belongs to the metallo-dependent hydrolases superfamily. ATZ/TRZ family.

In Escherichia coli (strain K12), this protein is Putative aminohydrolase SsnA (ssnA).